A 197-amino-acid polypeptide reads, in one-letter code: Transcription factor FapR (197 aa).

This sequence belongs to the FapR family.

Transcriptional factor involved in regulation of membrane lipid biosynthesis by repressing genes involved in fatty acid and phospholipid metabolism. The sequence is that of Transcription factor FapR from Bacillus cytotoxicus (strain DSM 22905 / CIP 110041 / 391-98 / NVH 391-98).